A 341-amino-acid chain; its full sequence is S-adenosylmethionine:tRNA ribosyltransferase-isomerase (341 aa).

It belongs to the QueA family. As to quaternary structure, monomer.

The protein resides in the cytoplasm. It carries out the reaction 7-aminomethyl-7-carbaguanosine(34) in tRNA + S-adenosyl-L-methionine = epoxyqueuosine(34) in tRNA + adenine + L-methionine + 2 H(+). It participates in tRNA modification; tRNA-queuosine biosynthesis. Transfers and isomerizes the ribose moiety from AdoMet to the 7-aminomethyl group of 7-deazaguanine (preQ1-tRNA) to give epoxyqueuosine (oQ-tRNA). This is S-adenosylmethionine:tRNA ribosyltransferase-isomerase from Clostridium perfringens (strain ATCC 13124 / DSM 756 / JCM 1290 / NCIMB 6125 / NCTC 8237 / Type A).